A 299-amino-acid polypeptide reads, in one-letter code: NAD kinase (299 aa).

Aspartate 71 acts as the Proton acceptor in catalysis. NAD(+) is bound by residues aspartate 71–glycine 72, asparagine 145–aspartate 146, arginine 173, aspartate 175, threonine 186–serine 191, alanine 210, and glutamine 248.

Belongs to the NAD kinase family. A divalent metal cation is required as a cofactor.

Its subcellular location is the cytoplasm. The catalysed reaction is NAD(+) + ATP = ADP + NADP(+) + H(+). Functionally, involved in the regulation of the intracellular balance of NAD and NADP, and is a key enzyme in the biosynthesis of NADP. Catalyzes specifically the phosphorylation on 2'-hydroxyl of the adenosine moiety of NAD to yield NADP. The protein is NAD kinase of Bordetella bronchiseptica (strain ATCC BAA-588 / NCTC 13252 / RB50) (Alcaligenes bronchisepticus).